We begin with the raw amino-acid sequence, 403 residues long: Acetate kinase (403 aa).

N7 serves as a coordination point for Mg(2+). K14 serves as a coordination point for ATP. R90 provides a ligand contact to substrate. Residue D147 is the Proton donor/acceptor of the active site. ATP is bound by residues 207-211 (HIGNG), 283-285 (DMR), and 331-335 (GVGEN). E386 contributes to the Mg(2+) binding site.

Belongs to the acetokinase family. In terms of assembly, homodimer. It depends on Mg(2+) as a cofactor. Requires Mn(2+) as cofactor.

It is found in the cytoplasm. It carries out the reaction acetate + ATP = acetyl phosphate + ADP. Its pathway is metabolic intermediate biosynthesis; acetyl-CoA biosynthesis; acetyl-CoA from acetate: step 1/2. In terms of biological role, catalyzes the formation of acetyl phosphate from acetate and ATP. Can also catalyze the reverse reaction. The protein is Acetate kinase of Thermotoga petrophila (strain ATCC BAA-488 / DSM 13995 / JCM 10881 / RKU-1).